Reading from the N-terminus, the 93-residue chain is MLAVNEYFEGQVKSISFAGADKPASVGVMEAGEYEFGTAAPEVMQVISGALTVLLPGQAEWQTFSAGEQFDVIGDAKFQVKVATQTAYLCIYG.

Belongs to the nucleoside phosphorylase PpnP family.

The catalysed reaction is a purine D-ribonucleoside + phosphate = a purine nucleobase + alpha-D-ribose 1-phosphate. The enzyme catalyses adenosine + phosphate = alpha-D-ribose 1-phosphate + adenine. It catalyses the reaction cytidine + phosphate = cytosine + alpha-D-ribose 1-phosphate. It carries out the reaction guanosine + phosphate = alpha-D-ribose 1-phosphate + guanine. The catalysed reaction is inosine + phosphate = alpha-D-ribose 1-phosphate + hypoxanthine. The enzyme catalyses thymidine + phosphate = 2-deoxy-alpha-D-ribose 1-phosphate + thymine. It catalyses the reaction uridine + phosphate = alpha-D-ribose 1-phosphate + uracil. It carries out the reaction xanthosine + phosphate = alpha-D-ribose 1-phosphate + xanthine. Catalyzes the phosphorolysis of diverse nucleosides, yielding D-ribose 1-phosphate and the respective free bases. Can use uridine, adenosine, guanosine, cytidine, thymidine, inosine and xanthosine as substrates. Also catalyzes the reverse reactions. The chain is Pyrimidine/purine nucleoside phosphorylase from Shewanella pealeana (strain ATCC 700345 / ANG-SQ1).